An 81-amino-acid polypeptide reads, in one-letter code: Bursicon (81 aa).

Heterodimer of burs and pburs. Central nervous system. Coexpressed with CCAP in most CCAP-specific neurons. Coexpressed with pburs in the large bilateral lateral neurosecretory neurons of the first three unfused abdominal ganglia and in all anterior bilateral cell pairs in the thoracic ganglia.

The protein localises to the secreted. Final heterodimeric neurohormone released at the end of the molting cycle, involved in the sclerotization (tanning) of the insect cuticle, melanization and wing spreading. The chain is Bursicon (burs) from Periplaneta americana (American cockroach).